Consider the following 497-residue polypeptide: Glycerol kinase (497 aa).

An ADP-binding site is contributed by Thr13. Residues Thr13, Thr14, and Ser15 each coordinate ATP. Thr13 provides a ligand contact to sn-glycerol 3-phosphate. An ADP-binding site is contributed by Arg17. Arg83, Glu84, and Tyr135 together coordinate sn-glycerol 3-phosphate. 3 residues coordinate glycerol: Arg83, Glu84, and Tyr135. His231 carries the phosphohistidine; by HPr modification. Residue Asp245 coordinates sn-glycerol 3-phosphate. The glycerol site is built by Asp245 and Gln246. Positions 267 and 310 each coordinate ADP. ATP-binding residues include Thr267, Gly310, Gln314, and Gly411. Positions 411 and 415 each coordinate ADP.

This sequence belongs to the FGGY kinase family. In terms of assembly, homotetramer and homodimer (in equilibrium). In terms of processing, the phosphoenolpyruvate-dependent sugar phosphotransferase system (PTS), including enzyme I, and histidine-containing protein (HPr) are required for the phosphorylation, which leads to the activation of the enzyme.

The enzyme catalyses glycerol + ATP = sn-glycerol 3-phosphate + ADP + H(+). It participates in polyol metabolism; glycerol degradation via glycerol kinase pathway; sn-glycerol 3-phosphate from glycerol: step 1/1. With respect to regulation, activated by phosphorylation and inhibited by fructose 1,6-bisphosphate (FBP). Its function is as follows. Key enzyme in the regulation of glycerol uptake and metabolism. Catalyzes the phosphorylation of glycerol to yield sn-glycerol 3-phosphate. The chain is Glycerol kinase from Listeria welshimeri serovar 6b (strain ATCC 35897 / DSM 20650 / CCUG 15529 / CIP 8149 / NCTC 11857 / SLCC 5334 / V8).